The sequence spans 347 residues: Autoinducer 2 import system permease protein LsrC (347 aa).

Transmembrane regions (helical) follow at residues 14–34 (LLAIVCLFVFPGALDSQYLSV), 39–59 (MVFSSAQILMLLAIGATMVML), 72–92 (GMCAVLLGVMLNAGYSLPVAC), 93–113 (LATLILGIVAGFFNGVLVAWL), 115–135 (IPAIVATLGTLGLYRGIMLLW), 155–175 (VFLGISAIGWFTLVLALLMAW), 213–233 (LNGGMAALAGIVFTSQIGFIP), 249–269 (VLGGISLLGGSGTVIGAILGA), and 284–304 (IPAWWNDFIAGLVLLGVLVFD).

This sequence belongs to the binding-protein-dependent transport system permease family. AraH/RbsC subfamily. In terms of assembly, the complex is composed of two ATP-binding proteins (LsrA), two transmembrane proteins (LsrC and LsrD) and a solute-binding protein (LsrB).

It localises to the cell inner membrane. Part of the ABC transporter complex LsrABCD involved in autoinducer 2 (AI-2) import. Probably responsible for the translocation of the substrate across the membrane. This is Autoinducer 2 import system permease protein LsrC (lsrC) from Salmonella choleraesuis (strain SC-B67).